A 275-amino-acid chain; its full sequence is Fructose-2,6-bisphosphatase TIGAR (275 aa).

Histidine 11 acts as the Tele-phosphohistidine intermediate in catalysis. The active-site Proton donor/acceptor is glutamate 89.

The protein belongs to the phosphoglycerate mutase family.

It is found in the cytoplasm. It localises to the nucleus. Its subcellular location is the mitochondrion. It carries out the reaction beta-D-fructose 2,6-bisphosphate + H2O = beta-D-fructose 6-phosphate + phosphate. Fructose-bisphosphatase hydrolyzing fructose-2,6-bisphosphate as well as fructose-1,6-bisphosphate. Acts as a negative regulator of glycolysis by lowering intracellular levels of fructose-2,6-bisphosphate in a p53/TP53-dependent manner, resulting in the pentose phosphate pathway (PPP) activation and NADPH production. Contributes to the generation of reduced glutathione to cause a decrease in intracellular reactive oxygen species (ROS) content, correlating with its ability to protect cells from oxidative or metabolic stress-induced cell death. May play a role in mitophagy inhibition. The sequence is that of Fructose-2,6-bisphosphatase TIGAR from Xenopus laevis (African clawed frog).